Consider the following 536-residue polypeptide: Trigger factor (536 aa).

The PPIase FKBP-type domain occupies 164-249; the sequence is GDQVIIDFAG…VKEVKVPAAT (86 aa). Positions 439 to 536 are disordered; that stretch reads IEADDDSGHV…APAKKAAAKK (98 aa). Residues 472–502 are compositionally biased toward basic and acidic residues; sequence TKKEAVKDEAKAEEAPAKKAPAKKAEPKAEA. Low complexity predominate over residues 503-515; it reads KPAAAKKAAPAKA. Basic and acidic residues predominate over residues 516–525; that stretch reads AAEEKAEPAK. Over residues 527-536 the composition is skewed to basic residues; the sequence is APAKKAAAKK.

Belongs to the FKBP-type PPIase family. Tig subfamily.

The protein resides in the cytoplasm. The catalysed reaction is [protein]-peptidylproline (omega=180) = [protein]-peptidylproline (omega=0). Its function is as follows. Involved in protein export. Acts as a chaperone by maintaining the newly synthesized protein in an open conformation. Functions as a peptidyl-prolyl cis-trans isomerase. This chain is Trigger factor, found in Sphingopyxis alaskensis (strain DSM 13593 / LMG 18877 / RB2256) (Sphingomonas alaskensis).